The chain runs to 270 residues: Hydroxyethylthiazole kinase (270 aa).

Met44 is a substrate binding site. ATP-binding residues include Arg119 and Thr165. Gly192 serves as a coordination point for substrate.

The protein belongs to the Thz kinase family. The cofactor is Mg(2+).

The enzyme catalyses 5-(2-hydroxyethyl)-4-methylthiazole + ATP = 4-methyl-5-(2-phosphooxyethyl)-thiazole + ADP + H(+). Its pathway is cofactor biosynthesis; thiamine diphosphate biosynthesis; 4-methyl-5-(2-phosphoethyl)-thiazole from 5-(2-hydroxyethyl)-4-methylthiazole: step 1/1. Catalyzes the phosphorylation of the hydroxyl group of 4-methyl-5-beta-hydroxyethylthiazole (THZ). This is Hydroxyethylthiazole kinase from Corynebacterium efficiens (strain DSM 44549 / YS-314 / AJ 12310 / JCM 11189 / NBRC 100395).